Consider the following 65-residue polypeptide: VRDGYIVDDKNCVYHCIPPCDGLCKKNGGKSGSCSFLVPSGLACWCKALPDNVPIKDPSYKCHKR.

Residues 2-63 (RDGYIVDDKN…PIKDPSYKCH (62 aa)) enclose the LCN-type CS-alpha/beta domain. 4 disulfide bridges follow: Cys-12-Cys-62, Cys-16-Cys-34, Cys-20-Cys-44, and Cys-24-Cys-46. Position 65 (Arg-65) is a propeptide, removed by a carboxypeptidase.

This sequence belongs to the long (4 C-C) scorpion toxin superfamily. Sodium channel inhibitor family. Alpha subfamily. As to expression, expressed by the venom gland.

Its subcellular location is the secreted. In terms of biological role, alpha toxins bind voltage-independently at site-3 of sodium channels (Nav) and inhibit the inactivation of the activated channels, thereby blocking neuronal transmission. Electrophysiological studies of this were performed using sodium-channels expressed in F11 cell culture, by patch-clamp recordings. Affinity of this toxin toward sodium channels in F11 cell line is in the order of 1 uM concentration. The chain is Sodium channel alpha-toxin Acra4 from Androctonus crassicauda (Arabian fat-tailed scorpion).